We begin with the raw amino-acid sequence, 713 residues long: Polyribonucleotide nucleotidyltransferase (713 aa).

Asp495 and Asp501 together coordinate Mg(2+). Positions 562 to 621 constitute a KH domain; sequence PRLLTLKIPVDMIGLVIGPGGKTIKRIVEETGAKVDIEDDGTVVVSSIDGAKALAAKQII. Positions 631-700 constitute an S1 motif domain; that stretch reads DKVYLGTVTR…QKGRINLTRR (70 aa).

It belongs to the polyribonucleotide nucleotidyltransferase family. Requires Mg(2+) as cofactor.

Its subcellular location is the cytoplasm. The catalysed reaction is RNA(n+1) + phosphate = RNA(n) + a ribonucleoside 5'-diphosphate. Involved in mRNA degradation. Catalyzes the phosphorolysis of single-stranded polyribonucleotides processively in the 3'- to 5'-direction. This is Polyribonucleotide nucleotidyltransferase from Gloeobacter violaceus (strain ATCC 29082 / PCC 7421).